We begin with the raw amino-acid sequence, 191 residues long: Cytochrome c oxidase subunit 6b-1 (191 aa).

The segment covering 1–14 has biased composition (polar residues); the sequence is MADAVNAQTPSLSE. The segment at 1 to 126 is disordered; that stretch reads MADAVNAQTP…IKLETAPADF (126 aa). N-acetylalanine is present on Ala-2. Basic and acidic residues-rich tracts occupy residues 16-37 and 45-56; these read YHLE…KEVA and EEVKTEQAKEES. A compositionally biased stretch (low complexity) spans 72-98; it reads APESTEVASEAPAAAEDNAEETPAAAE. The span at 99–114 shows a compositional bias: acidic residues; the sequence is ENNDENASEEVAEETP. In terms of domain architecture, CHCH spans 134–177; it reads TRHCFTRYVEYHRCVAAKGDDAPECDKFAKFYRSLCPSEWVDRW. The Cx9C motif motif lies at 137 to 147; the sequence is CFTRYVEYHRC. Cystine bridges form between Cys-137/Cys-169 and Cys-147/Cys-158. A Cx10C motif motif is present at residues 158 to 169; that stretch reads CDKFAKFYRSLC.

It belongs to the cytochrome c oxidase subunit 6B (TC 3.D.4.8) family. As to expression, expressed in the whole plant.

The protein localises to the mitochondrion. In terms of biological role, this protein is one of the nuclear-coded polypeptide chains of cytochrome c oxidase, the terminal oxidase in mitochondrial electron transport. This protein may be one of the heme-binding subunits of the oxidase. This Arabidopsis thaliana (Mouse-ear cress) protein is Cytochrome c oxidase subunit 6b-1 (COX6B-1).